We begin with the raw amino-acid sequence, 140 residues long: Large ribosomal subunit protein uL16c (140 aa).

It belongs to the universal ribosomal protein uL16 family. As to quaternary structure, part of the 50S ribosomal subunit.

The protein resides in the plastid. It is found in the chloroplast. The polypeptide is Large ribosomal subunit protein uL16c (Cyanidium caldarium (Red alga)).